Here is a 352-residue protein sequence, read N- to C-terminus: Light dependent period A (352 aa).

4Fe-4S ferredoxin-type domains follow at residues 88–119 (RRAWFDPDRCPTDCPRPCERVCPTDAITSTGV) and 121–144 (RDRCYGCGRCLPICPLGLIEAQAW). Positions 97, 101, 105, 109, 124, 127, 130, and 134 each coordinate [4Fe-4S] cluster.

In terms of assembly, interacts with KaiA, CikA and SasA; the complexes do not follow circadian rhythms. Requires [4Fe-4S] cluster as cofactor.

Functions in an input pathway to the Kai circadian clock. Probably senses the metabolic state of the cell via plastoquinone levels and informs the clock to modulate the photoperiod length. Deletion decreases the ability of the bacteria to modulate the circadian period in response to altered light regimes. Mild overexpression increases the photoperiod. Rapidly degraded in the presence of the quinone analog DBMIB (2,5-dibromo-3-methyl-6-isopropyl-p-benzoquinone), an artifical electron acceptor for photosystem II that reduces the plastoquinone pool. Partially resonsible for sensitivity of CikA to DBMIB, influences the levels of KaiA. In Synechococcus elongatus (strain ATCC 33912 / PCC 7942 / FACHB-805) (Anacystis nidulans R2), this protein is Light dependent period A.